A 185-amino-acid polypeptide reads, in one-letter code: MATTNDLKNGMVLNLDGELWAVVEFQHVKPGKGGAFVRTTLKNVLSGKVVDKTFNAGTKVETATVDKRTMQYLYADGEDFVFMDLETFDQINVLGDTVGEAANYLLPEAEATVATHEGVPLYVELPTSVVLEITYTEPGLQGDRSTGGSKPATVETGATVQVPLFITTGEKIKVDTRDGRYLGRA.

It belongs to the elongation factor P family.

Its subcellular location is the cytoplasm. Its pathway is protein biosynthesis; polypeptide chain elongation. In terms of biological role, involved in peptide bond synthesis. Stimulates efficient translation and peptide-bond synthesis on native or reconstituted 70S ribosomes in vitro. Probably functions indirectly by altering the affinity of the ribosome for aminoacyl-tRNA, thus increasing their reactivity as acceptors for peptidyl transferase. The sequence is that of Elongation factor P from Salinispora tropica (strain ATCC BAA-916 / DSM 44818 / JCM 13857 / NBRC 105044 / CNB-440).